The chain runs to 255 residues: Large ribosomal subunit protein uL4 (255 aa).

It belongs to the universal ribosomal protein uL4 family. Part of the 50S ribosomal subunit.

One of the primary rRNA binding proteins, this protein initially binds near the 5'-end of the 23S rRNA. It is important during the early stages of 50S assembly. It makes multiple contacts with different domains of the 23S rRNA in the assembled 50S subunit and ribosome. Its function is as follows. Forms part of the polypeptide exit tunnel. The polypeptide is Large ribosomal subunit protein uL4 (Pyrococcus horikoshii (strain ATCC 700860 / DSM 12428 / JCM 9974 / NBRC 100139 / OT-3)).